The sequence spans 550 residues: (S)-beta-bisabolene synthase (550 aa).

Residues Asp303, Asp307, Ser451, and Glu455 each contribute to the Mg(2+) site. The short motif at 303 to 307 (DDTYD) is the DDXXD motif element.

This sequence belongs to the terpene synthase family. Tpsa subfamily. The cofactor is Mg(2+). Mn(2+) is required as a cofactor. Expressed only in young rhizomes. Not detected in leaves, roots and mature rhizomes.

The catalysed reaction is (2E,6E)-farnesyl diphosphate = (S)-beta-bisabolene + diphosphate. Sesquiterpene synthase involved in the biosynthesis of bisabolene. This Zingiber officinale (Ginger) protein is (S)-beta-bisabolene synthase (TPS1).